We begin with the raw amino-acid sequence, 342 residues long: Renalase (342 aa).

The first 17 residues, M1 to A17, serve as a signal peptide directing secretion. Residues T12, R42, and Q61 to Y62 each bind FAD.

It belongs to the renalase family. The cofactor is FAD. In terms of tissue distribution, expressed predominantly in kidney and testis with lower levels in liver, heart and embryo and weak expression in brain and skeletal muscle.

Its subcellular location is the secreted. It carries out the reaction 1,2-dihydro-beta-NAD + O2 + H(+) = H2O2 + NAD(+). The enzyme catalyses 1,2-dihydro-beta-NADP + O2 + H(+) = H2O2 + NADP(+). It catalyses the reaction 1,6-dihydro-beta-NADP + O2 + H(+) = H2O2 + NADP(+). The catalysed reaction is 1,6-dihydro-beta-NAD + O2 + H(+) = H2O2 + NAD(+). In terms of biological role, catalyzes the oxidation of the less abundant 1,2-dihydro-beta-NAD(P) and 1,6-dihydro-beta-NAD(P) to form beta-NAD(P)(+). The enzyme hormone is secreted by the kidney, and circulates in blood and modulates cardiac function and systemic blood pressure. Lowers blood pressure in vivo by decreasing cardiac contractility and heart rate and preventing a compensatory increase in peripheral vascular tone, suggesting a causal link to the increased plasma catecholamine and heightened cardiovascular risk. High concentrations of catecholamines activate plasma renalase and promotes its secretion and synthesis. The protein is Renalase of Mus musculus (Mouse).